Here is a 149-residue protein sequence, read N- to C-terminus: MRAVVQRVISSKVEVDGRVIGSIGKGLNVLLGISKEDTEEDIKYLKEKIINLRIFEDENEKLNKSLLDIGGDIIIVSQFTLYGDCRKGRRPSFIEALGGEEAYILYNKFVESIKKEVNNVATGEFGADMKVYIENDGPVTILLDSKKTF.

Residues 137–138 (GP) carry the Gly-cisPro motif, important for rejection of L-amino acids motif.

This sequence belongs to the DTD family. As to quaternary structure, homodimer.

Its subcellular location is the cytoplasm. It catalyses the reaction glycyl-tRNA(Ala) + H2O = tRNA(Ala) + glycine + H(+). It carries out the reaction a D-aminoacyl-tRNA + H2O = a tRNA + a D-alpha-amino acid + H(+). In terms of biological role, an aminoacyl-tRNA editing enzyme that deacylates mischarged D-aminoacyl-tRNAs. Also deacylates mischarged glycyl-tRNA(Ala), protecting cells against glycine mischarging by AlaRS. Acts via tRNA-based rather than protein-based catalysis; rejects L-amino acids rather than detecting D-amino acids in the active site. By recycling D-aminoacyl-tRNA to D-amino acids and free tRNA molecules, this enzyme counteracts the toxicity associated with the formation of D-aminoacyl-tRNA entities in vivo and helps enforce protein L-homochirality. In Clostridium botulinum (strain ATCC 19397 / Type A), this protein is D-aminoacyl-tRNA deacylase.